Here is a 286-residue protein sequence, read N- to C-terminus: uncharacterized protein (286 aa).

The next 2 helical transmembrane spans lie at 201-221 and 231-251; these read VIYS…LCET and AIIL…YLMM.

The protein localises to the cell membrane. This is an uncharacterized protein from Methanocaldococcus jannaschii (strain ATCC 43067 / DSM 2661 / JAL-1 / JCM 10045 / NBRC 100440) (Methanococcus jannaschii).